The sequence spans 494 residues: Glutamate--tRNA ligase (494 aa).

The 'HIGH' region signature appears at 9–19 (PSPTGDPHVGT). The 'KMSKS' region signature appears at 250 to 254 (KLSKR). ATP is bound at residue Lys253.

Belongs to the class-I aminoacyl-tRNA synthetase family. Glutamate--tRNA ligase type 1 subfamily. Monomer.

Its subcellular location is the cytoplasm. The catalysed reaction is tRNA(Glu) + L-glutamate + ATP = L-glutamyl-tRNA(Glu) + AMP + diphosphate. Catalyzes the attachment of glutamate to tRNA(Glu) in a two-step reaction: glutamate is first activated by ATP to form Glu-AMP and then transferred to the acceptor end of tRNA(Glu). In Alcanivorax borkumensis (strain ATCC 700651 / DSM 11573 / NCIMB 13689 / SK2), this protein is Glutamate--tRNA ligase.